A 159-amino-acid polypeptide reads, in one-letter code: Cyclic pyranopterin monophosphate synthase (159 aa).

Substrate contacts are provided by residues 75–77 (LCH) and 113–114 (ME). Residue Asp128 is part of the active site.

It belongs to the MoaC family. In terms of assembly, homohexamer; trimer of dimers.

The catalysed reaction is (8S)-3',8-cyclo-7,8-dihydroguanosine 5'-triphosphate = cyclic pyranopterin phosphate + diphosphate. Its pathway is cofactor biosynthesis; molybdopterin biosynthesis. Functionally, catalyzes the conversion of (8S)-3',8-cyclo-7,8-dihydroguanosine 5'-triphosphate to cyclic pyranopterin monophosphate (cPMP). This chain is Cyclic pyranopterin monophosphate synthase, found in Vibrio vulnificus (strain YJ016).